The sequence spans 628 residues: DNA ligase (628 aa).

NAD(+) contacts are provided by residues 36–40 (DVEYD), 85–86 (SL), and Glu117. Residue Lys119 is the N6-AMP-lysine intermediate of the active site. The NAD(+) site is built by Arg140, Glu174, Lys309, and Lys333. Cys427, Cys430, Cys446, and Cys452 together coordinate Zn(2+).

This sequence belongs to the NAD-dependent DNA ligase family. LigA subfamily. Requires Mg(2+) as cofactor. Mn(2+) is required as a cofactor.

It catalyses the reaction NAD(+) + (deoxyribonucleotide)n-3'-hydroxyl + 5'-phospho-(deoxyribonucleotide)m = (deoxyribonucleotide)n+m + AMP + beta-nicotinamide D-nucleotide.. Its function is as follows. DNA ligase that catalyzes the formation of phosphodiester linkages between 5'-phosphoryl and 3'-hydroxyl groups in double-stranded DNA using NAD as a coenzyme and as the energy source for the reaction. It is essential for DNA replication and repair of damaged DNA. The chain is DNA ligase from Tropheryma whipplei (strain TW08/27) (Whipple's bacillus).